Consider the following 297-residue polypeptide: Homeobox protein HMX3 (297 aa).

Disordered regions lie at residues 24–43 and 96–172; these read NSDS…KAGL and AAQK…RKKK. Basic and acidic residues-rich tracts occupy residues 109 to 123 and 145 to 166; these read TDRD…SDPD and EDGK…ADKK. The segment at residues 170 to 229 is a DNA-binding region (homeobox); the sequence is KKKTRTVFSRSQVFQLESTFDMKRYLSSSERAGLAASLHLTETQVKIWFQNRRNKWKRQL.

This sequence belongs to the HMX homeobox family. In terms of tissue distribution, expressed in the ear placode and vesicle and in cells forming the vestibulo-acoustic ganglion. Also expressed in the lateral line.

Its subcellular location is the nucleus. Its function is as follows. Transcription factor involved in specification of neuronal cell types and which is required for inner ear and hypothalamus development. Binds to the 5'-CAAGTG-3' core sequence. The protein is Homeobox protein HMX3 (hmx3) of Danio rerio (Zebrafish).